The chain runs to 201 residues: ATP-dependent Clp protease proteolytic subunit (201 aa).

Catalysis depends on Ser101, which acts as the Nucleophile. Residue His126 is part of the active site.

The protein belongs to the peptidase S14 family. In terms of assembly, component of the chloroplastic Clp protease core complex.

It localises to the plastid. The protein localises to the chloroplast stroma. It carries out the reaction Hydrolysis of proteins to small peptides in the presence of ATP and magnesium. alpha-casein is the usual test substrate. In the absence of ATP, only oligopeptides shorter than five residues are hydrolyzed (such as succinyl-Leu-Tyr-|-NHMec, and Leu-Tyr-Leu-|-Tyr-Trp, in which cleavage of the -Tyr-|-Leu- and -Tyr-|-Trp bonds also occurs).. Its function is as follows. Cleaves peptides in various proteins in a process that requires ATP hydrolysis. Has a chymotrypsin-like activity. Plays a major role in the degradation of misfolded proteins. The polypeptide is ATP-dependent Clp protease proteolytic subunit (Staurastrum punctulatum (Green alga)).